Here is a 64-residue protein sequence, read N- to C-terminus: Large ribosomal subunit protein bL32 (64 aa).

Over residues 1 to 16 the composition is skewed to basic residues; that stretch reads MAVPKHRKSKAKKRSR. The tract at residues 1–22 is disordered; sequence MAVPKHRKSKAKKRSRQAANDK.

Belongs to the bacterial ribosomal protein bL32 family.

The sequence is that of Large ribosomal subunit protein bL32 from Brachyspira hyodysenteriae (strain ATCC 49526 / WA1).